Consider the following 375-residue polypeptide: N5-carboxyaminoimidazole ribonucleotide synthase (375 aa).

ATP-binding positions include Arg108, Lys148, 153-159, 183-186, Glu191, His214, and 268-269; these read GYDGKGQ, EQYL, and NE. In terms of domain architecture, ATP-grasp spans 112-298; sequence KQTLQDSGSN…QFDTHIKAIT (187 aa).

This sequence belongs to the PurK/PurT family. As to quaternary structure, homodimer.

It carries out the reaction 5-amino-1-(5-phospho-beta-D-ribosyl)imidazole + hydrogencarbonate + ATP = 5-carboxyamino-1-(5-phospho-D-ribosyl)imidazole + ADP + phosphate + 2 H(+). The protein operates within purine metabolism; IMP biosynthesis via de novo pathway; 5-amino-1-(5-phospho-D-ribosyl)imidazole-4-carboxylate from 5-amino-1-(5-phospho-D-ribosyl)imidazole (N5-CAIR route): step 1/2. In terms of biological role, catalyzes the ATP-dependent conversion of 5-aminoimidazole ribonucleotide (AIR) and HCO(3)(-) to N5-carboxyaminoimidazole ribonucleotide (N5-CAIR). The polypeptide is N5-carboxyaminoimidazole ribonucleotide synthase (Staphylococcus saprophyticus subsp. saprophyticus (strain ATCC 15305 / DSM 20229 / NCIMB 8711 / NCTC 7292 / S-41)).